We begin with the raw amino-acid sequence, 830 residues long: Venom phosphodiesterase (830 aa).

2 consecutive SMB domains span residues 7-50 and 51-95; these read PLES…VLPT and QSWS…RETS. 16 disulfides stabilise this stretch: Cys-11/Cys-15, Cys-11/Cys-28, Cys-15/Cys-46, Cys-26/Cys-28, Cys-26/Cys-39, Cys-32/Cys-38, Cys-39/Cys-46, Cys-55/Cys-60, Cys-55/Cys-72, Cys-60/Cys-90, Cys-70/Cys-72, Cys-70/Cys-83, Cys-76/Cys-82, Cys-83/Cys-90, Cys-101/Cys-147, and Cys-109/Cys-321. A glycan (N-linked (GlcNAc...) asparagine) is linked at Asn-16. The Cell attachment site signature appears at 35-37; sequence RKA. Positions 124 and 162 each coordinate a divalent metal cation. Thr-162 (AMP-threonine intermediate) is an active-site residue. Asn-193, Asn-236, and Asn-247 each carry an N-linked (GlcNAc...) asparagine glycan. Lys-248 serves as a coordination point for AMP. A divalent metal cation-binding residues include Asp-282, His-286, Asp-329, and His-330. AMP is bound at residue His-286. 6 cysteine pairs are disulfide-bonded: Cys-337–Cys-434, Cys-385–Cys-772, Cys-518–Cys-575, Cys-531–Cys-632, Cys-533–Cys-617, and Cys-740–Cys-750. His-439 lines the a divalent metal cation pocket. Asn-489 carries an N-linked (GlcNAc...) asparagine glycan. Residues Asn-723 and Asn-742 are each glycosylated (N-linked (GlcNAc...) asparagine).

The protein belongs to the nucleotide pyrophosphatase/phosphodiesterase family. Monomer cleaved in two subunits; disulfide-linked. Is synthesized as a single-chain protein and is subsequently cleaved to form a two-subunit protein held together with disulfide bonds. A divalent metal cation is required as a cofactor. Expressed by venom gland.

Its subcellular location is the secreted. It catalyses the reaction ADP + H2O = AMP + phosphate + H(+). Its function is as follows. Hydrolyzes ADP with high activity. Shows weak or no activity on 5'-AMP, 5'-GMP, 3'-AMP, ATP, cAMP, and cGMP. Is devoid of monophosphatase and proteinase activities. Dose-dependently inhibits platelet aggregation induced by ADP and collagen. This Naja atra (Chinese cobra) protein is Venom phosphodiesterase.